A 203-amino-acid polypeptide reads, in one-letter code: Membrane-spanning 4-domains subfamily A member 13 (203 aa).

The next 4 membrane-spanning stretches (helical) occupy residues valine 15–leucine 35, methionine 56–alanine 76, isoleucine 84–leucine 104, and phenylalanine 141–valine 161.

It belongs to the MS4A family.

Its subcellular location is the membrane. Its function is as follows. May be involved in signal transduction as a component of a multimeric receptor complex. This Mus musculus (Mouse) protein is Membrane-spanning 4-domains subfamily A member 13 (Ms4a13).